We begin with the raw amino-acid sequence, 310 residues long: GMP synthase [glutamine-hydrolyzing] subunit B (310 aa).

The region spanning 2-185 is the GMPS ATP-PPase domain; it reads FDPKKFIDEA…LGLPDSIVYR (184 aa). ATP is bound at residue 29–35; that stretch reads SGGVDSS.

Heterodimer composed of a glutamine amidotransferase subunit (A) and a GMP-binding subunit (B).

It catalyses the reaction XMP + L-glutamine + ATP + H2O = GMP + L-glutamate + AMP + diphosphate + 2 H(+). The protein operates within purine metabolism; GMP biosynthesis; GMP from XMP (L-Gln route): step 1/1. In terms of biological role, catalyzes the synthesis of GMP from XMP. This is GMP synthase [glutamine-hydrolyzing] subunit B (guaAB) from Methanocaldococcus jannaschii (strain ATCC 43067 / DSM 2661 / JAL-1 / JCM 10045 / NBRC 100440) (Methanococcus jannaschii).